Consider the following 151-residue polypeptide: Flavodoxin YqcA (151 aa).

A Flavodoxin-like domain is found at I4–A145. FMN is bound by residues T10 to A15 and N99 to C101.

This sequence belongs to the flavodoxin family. MioC subfamily. Monomer. The cofactor is FMN.

Functionally, probable electron transporter. The protein is Flavodoxin YqcA of Pectobacterium carotovorum subsp. carotovorum (Erwinia carotovora subsp. carotovora).